The primary structure comprises 1022 residues: Probable E3 ubiquitin-protein ligase HERC6 (1022 aa).

RCC1 repeat units follow at residues 41 to 92 (NHRV…AVCH), 93 to 145 (KGRV…ALSK), 147 to 198 (SQVF…ALSL), 200 to 253 (GTSF…VLTQ), and 254 to 304 (DGKV…AYVH). One can recognise an HECT domain in the interval 693–1017 (EATDFCKVLV…INNNRGFVSP (325 aa)). The Glycyl thioester intermediate role is filled by C985.

As to expression, detected in brain, heart, placenta and testis.

The protein localises to the cytoplasm. Its subcellular location is the cytosol. It catalyses the reaction S-ubiquitinyl-[E2 ubiquitin-conjugating enzyme]-L-cysteine + [acceptor protein]-L-lysine = [E2 ubiquitin-conjugating enzyme]-L-cysteine + N(6)-ubiquitinyl-[acceptor protein]-L-lysine.. It participates in protein modification; protein ubiquitination. In terms of biological role, E3 ubiquitin-protein ligase which accepts ubiquitin from an E2 ubiquitin-conjugating enzyme in the form of a thioester and then directly transfers the ubiquitin to targeted substrates. This chain is Probable E3 ubiquitin-protein ligase HERC6 (HERC6), found in Homo sapiens (Human).